We begin with the raw amino-acid sequence, 146 residues long: UPF0742 protein PB2B2.17c (146 aa).

Residues 38–60 (LTVKYCLAVKLLIYLLYCWYIYS) form a helical membrane-spanning segment.

Belongs to the UPF0742 family.

The protein resides in the cytoplasm. It localises to the nucleus membrane. In Schizosaccharomyces pombe (strain 972 / ATCC 24843) (Fission yeast), this protein is UPF0742 protein PB2B2.17c.